Here is a 531-residue protein sequence, read N- to C-terminus: tRNA-2-methylthio-N(6)-dimethylallyladenosine synthase (531 aa).

The tract at residues 1–26 (MNEKQRLEQTGQIKTESHPADRKSAL) is disordered. Residues 15–26 (TESHPADRKSAL) show a composition bias toward basic and acidic residues. An MTTase N-terminal domain is found at 80 to 198 (RKFYIRTYGC…LPYILHEAYM (119 aa)). 6 residues coordinate [4Fe-4S] cluster: Cys-89, Cys-125, Cys-159, Cys-235, Cys-239, and Cys-242. The Radical SAM core domain maps to 221-451 (RKGKIKAWVN…NDLVQEIAAK (231 aa)). The TRAM domain maps to 454-517 (KQYEGQVVEV…TWTLTGELVN (64 aa)).

This sequence belongs to the methylthiotransferase family. MiaB subfamily. In terms of assembly, monomer. [4Fe-4S] cluster serves as cofactor.

The protein localises to the cytoplasm. The catalysed reaction is N(6)-dimethylallyladenosine(37) in tRNA + (sulfur carrier)-SH + AH2 + 2 S-adenosyl-L-methionine = 2-methylsulfanyl-N(6)-dimethylallyladenosine(37) in tRNA + (sulfur carrier)-H + 5'-deoxyadenosine + L-methionine + A + S-adenosyl-L-homocysteine + 2 H(+). In terms of biological role, catalyzes the methylthiolation of N6-(dimethylallyl)adenosine (i(6)A), leading to the formation of 2-methylthio-N6-(dimethylallyl)adenosine (ms(2)i(6)A) at position 37 in tRNAs that read codons beginning with uridine. In Geobacillus kaustophilus (strain HTA426), this protein is tRNA-2-methylthio-N(6)-dimethylallyladenosine synthase.